The sequence spans 486 residues: 3-dehydroshikimate dehydratase (486 aa).

It carries out the reaction 3-dehydroshikimate = 3,4-dihydroxybenzoate + H2O. It functions in the pathway aromatic compound metabolism; 3,4-dihydroxybenzoate biosynthesis; 3,4-dihydroxybenzoate from 3-dehydroquinate: step 2/2. In terms of biological role, converts dehydroshikimate to protocatechuate. In Acinetobacter baylyi (strain ATCC 33305 / BD413 / ADP1), this protein is 3-dehydroshikimate dehydratase (quiC).